The following is a 245-amino-acid chain: tRNA1(Val) (adenine(37)-N6)-methyltransferase (245 aa).

Belongs to the methyltransferase superfamily. tRNA (adenine-N(6)-)-methyltransferase family.

Its subcellular location is the cytoplasm. It carries out the reaction adenosine(37) in tRNA1(Val) + S-adenosyl-L-methionine = N(6)-methyladenosine(37) in tRNA1(Val) + S-adenosyl-L-homocysteine + H(+). Specifically methylates the adenine in position 37 of tRNA(1)(Val) (anticodon cmo5UAC). This Escherichia coli (strain UTI89 / UPEC) protein is tRNA1(Val) (adenine(37)-N6)-methyltransferase.